We begin with the raw amino-acid sequence, 415 residues long: MFDRAQSTIANVDPEIWQAIQQENVRQEEHIELIASENYTSPAVMAAQGSQLTNKYAEGYPGKRYYGGCEYVDIVEQLAIDRVKALFGSEAANVQPNSGSQANQGVFFAMLKPGDTIMGMSLAHGGHLTHGSPVNMSGKWFNVVSYGLNENEDIDYEAADKLAHEHKPKLIVAGASAFALKIDFERLAKIAKAVGAYLMVDMAHYAGLIAAGVYPNPVPHADFVTTTTHKSLRGPRGGVILMKAEYEKQINSAIFPGIQGGPLMHVIAAKAVAFKEALSPEFKEYQQKVIENARVLAETLVKRGLRIVSGRTESHVMLVDLRAKNITGKAAEAALGNAHITVNKNAIPNDPEKPFVTSGVRLGSPAMTTRGFGPQEAELVGNLIADVLEHPEDAATIERVRAQVADLTKRFPVYR.

(6S)-5,6,7,8-tetrahydrofolate is bound by residues L122 and 126–128 (GHL). K230 is modified (N6-(pyridoxal phosphate)lysine).

It belongs to the SHMT family. As to quaternary structure, homodimer. Pyridoxal 5'-phosphate serves as cofactor.

The protein resides in the cytoplasm. The catalysed reaction is (6R)-5,10-methylene-5,6,7,8-tetrahydrofolate + glycine + H2O = (6S)-5,6,7,8-tetrahydrofolate + L-serine. Its pathway is one-carbon metabolism; tetrahydrofolate interconversion. It participates in amino-acid biosynthesis; glycine biosynthesis; glycine from L-serine: step 1/1. Functionally, catalyzes the reversible interconversion of serine and glycine with tetrahydrofolate (THF) serving as the one-carbon carrier. This reaction serves as the major source of one-carbon groups required for the biosynthesis of purines, thymidylate, methionine, and other important biomolecules. Also exhibits THF-independent aldolase activity toward beta-hydroxyamino acids, producing glycine and aldehydes, via a retro-aldol mechanism. The protein is Serine hydroxymethyltransferase 1 of Burkholderia thailandensis (strain ATCC 700388 / DSM 13276 / CCUG 48851 / CIP 106301 / E264).